Reading from the N-terminus, the 105-residue chain is MSLTQILLILFVGILVTTPHDIFIIIKELKKIKAYLINIKSSIVKNIDEPLETEQVNFYLKKIINLEGYYHGSYDLTTIKEKYYTLIINNDLIENESVPDITEKH.

Residues 4–26 (TQILLILFVGILVTTPHDIFIII) form a helical membrane-spanning segment.

The protein localises to the membrane. This is an uncharacterized protein from Rickettsia conorii (strain ATCC VR-613 / Malish 7).